The chain runs to 245 residues: Adenosylcobinamide-GDP ribazoletransferase (245 aa).

5 consecutive transmembrane segments (helical) span residues 31–51, 61–81, 113–133, 138–158, and 192–212; these read FGRAVLCYPLVGVLIGVVLYA, PLLQAALLLSLWVALSGALHL, VAVVVLVLVLLLKFSALAALL, AGLLPLAPWLARSSLPLLFLT, and LAFGLAGLLALLVTLMLFAWL.

The protein belongs to the CobS family. Requires Mg(2+) as cofactor.

It is found in the cell inner membrane. It carries out the reaction alpha-ribazole + adenosylcob(III)inamide-GDP = adenosylcob(III)alamin + GMP + H(+). It catalyses the reaction alpha-ribazole 5'-phosphate + adenosylcob(III)inamide-GDP = adenosylcob(III)alamin 5'-phosphate + GMP + H(+). The protein operates within cofactor biosynthesis; adenosylcobalamin biosynthesis; adenosylcobalamin from cob(II)yrinate a,c-diamide: step 7/7. Joins adenosylcobinamide-GDP and alpha-ribazole to generate adenosylcobalamin (Ado-cobalamin). Also synthesizes adenosylcobalamin 5'-phosphate from adenosylcobinamide-GDP and alpha-ribazole 5'-phosphate. The chain is Adenosylcobinamide-GDP ribazoletransferase from Pseudomonas aeruginosa (strain ATCC 15692 / DSM 22644 / CIP 104116 / JCM 14847 / LMG 12228 / 1C / PRS 101 / PAO1).